The chain runs to 103 residues: Viscotoxin-B (103 aa).

The signal sequence occupies residues 1–6 (FRNVES). 3 disulfides stabilise this stretch: Cys-9–Cys-46, Cys-10–Cys-38, and Cys-22–Cys-32. Positions 53 to 103 (FYCTLGCQSSKCASITTPPNSEVDAEAVRCKAACSNLCDFGVTTNQEIQDD) are cleaved as a propeptide — acidic domain.

Belongs to the plant thionin (TC 1.C.44) family.

The protein resides in the secreted. Its function is as follows. Thionins are small plant proteins which are toxic to animal cells. They seem to exert their toxic effect at the level of the cell membrane. Their precise function is not known. The polypeptide is Viscotoxin-B (THI2.2) (Viscum album (European mistletoe)).